The primary structure comprises 329 residues: DNA-directed RNA polymerase subunit alpha (329 aa).

The alpha N-terminal domain (alpha-NTD) stretch occupies residues 1-232 (MQEMLEQLLT…YQLIAFVDLK (232 aa)). The tract at residues 246 to 329 (FDPIFLQPVD…PSSLVSKESA (84 aa)) is alpha C-terminal domain (alpha-CTD).

The protein belongs to the RNA polymerase alpha chain family. Homodimer. The RNAP catalytic core consists of 2 alpha, 1 beta, 1 beta' and 1 omega subunit. When a sigma factor is associated with the core the holoenzyme is formed, which can initiate transcription.

The enzyme catalyses RNA(n) + a ribonucleoside 5'-triphosphate = RNA(n+1) + diphosphate. Its function is as follows. DNA-dependent RNA polymerase catalyzes the transcription of DNA into RNA using the four ribonucleoside triphosphates as substrates. The protein is DNA-directed RNA polymerase subunit alpha of Hydrogenovibrio crunogenus (strain DSM 25203 / XCL-2) (Thiomicrospira crunogena).